Reading from the N-terminus, the 247-residue chain is 2,3-bisphosphoglycerate-dependent phosphoglycerate mutase (247 aa).

Residues 8 to 15 (RHGESQWN), 21 to 22 (TG), R60, 87 to 90 (ERHY), K98, 114 to 115 (RR), and 183 to 184 (GN) each bind substrate. The Tele-phosphohistidine intermediate role is filled by H9. The active-site Proton donor/acceptor is the E87.

This sequence belongs to the phosphoglycerate mutase family. BPG-dependent PGAM subfamily.

It catalyses the reaction (2R)-2-phosphoglycerate = (2R)-3-phosphoglycerate. It functions in the pathway carbohydrate degradation; glycolysis; pyruvate from D-glyceraldehyde 3-phosphate: step 3/5. Catalyzes the interconversion of 2-phosphoglycerate and 3-phosphoglycerate. In Chlorobium phaeobacteroides (strain BS1), this protein is 2,3-bisphosphoglycerate-dependent phosphoglycerate mutase.